The following is a 244-amino-acid chain: uncharacterized protein (244 aa).

The disordered stretch occupies residues Met1–Gln127. The span at Trp34–Thr43 shows a compositional bias: polar residues. 2 stretches are compositionally biased toward low complexity: residues Gln45–Pro75 and Pro88–Gln127. The helical transmembrane segment at Val136 to Ile156 threads the bilayer.

Its subcellular location is the membrane. This is an uncharacterized protein from Mycobacterium tuberculosis (strain CDC 1551 / Oshkosh).